A 73-amino-acid polypeptide reads, in one-letter code: Biotin/lipoyl attachment protein (73 aa).

Positions 2 to 69 (TVSIQMAGNL…NEGDVLLELS (68 aa)) constitute a Biotinyl-binding domain. Lys-35 carries the post-translational modification N6-biotinyllysine; alternate. Lys-35 carries the N6-lipoyllysine; alternate modification.

Can be both biotinylated and lipoylated on Lys-35 upon overexpression in E.coli depending on the growth medium; the nature of the modification in situ in B.subtilis is unknown.

The sequence is that of Biotin/lipoyl attachment protein (yngHB) from Bacillus subtilis (strain 168).